Consider the following 285-residue polypeptide: Eukaryotic translation initiation factor 3 subunit F-2 (285 aa).

Residues 11-145 (VLIKPLVLFQ…TRLYCAVEIG (135 aa)) form the MPN domain.

It belongs to the eIF-3 subunit F family. Component of the eukaryotic translation initiation factor 3 (eIF-3) complex. The eIF-3 complex interacts with pix.

Its subcellular location is the cytoplasm. In terms of biological role, component of the eukaryotic translation initiation factor 3 (eIF-3) complex, which is involved in protein synthesis of a specialized repertoire of mRNAs and, together with other initiation factors, stimulates binding of mRNA and methionyl-tRNAi to the 40S ribosome. The eIF-3 complex specifically targets and initiates translation of a subset of mRNAs involved in cell proliferation. The polypeptide is Eukaryotic translation initiation factor 3 subunit F-2 (Drosophila erecta (Fruit fly)).